Consider the following 464-residue polypeptide: Serine/threonine-protein kinase 38-like (464 aa).

The residue at position 2 (A2) is an N-acetylalanine. The interval 63–88 (KKLRRSQHARKETEFLRLKRTRLGLD) is S100B binding. The residue at position 75 (T75) is a Phosphothreonine. In terms of domain architecture, Protein kinase spans 90–383 (FESLKVIGRG…VEEIKGHPFF (294 aa)). Residues 96–104 (IGRGAFGEV) and K119 each bind ATP. D213 functions as the Proton acceptor in the catalytic mechanism. S282 carries the post-translational modification Phosphoserine; by autocatalysis. The region spanning 384-453 (EGVDWEHIRE…KRFEGLTQRG (70 aa)) is the AGC-kinase C-terminal domain. The residue at position 442 (T442) is a Phosphothreonine; by STK24/MST3.

This sequence belongs to the protein kinase superfamily. AGC Ser/Thr protein kinase family. As to quaternary structure, homodimeric S100B binds two molecules of STK38L. Interacts with MICAL1; leading to inhibit the protein kinase activity by antagonizing activation by MST1/STK4. Interacts with MOB1 and MOB2. Requires Mg(2+) as cofactor. In terms of tissue distribution, ubiquitously expressed with highest levels observed in the thymus.

The protein resides in the cytoplasm. It is found in the cytoskeleton. Its subcellular location is the membrane. It carries out the reaction L-seryl-[protein] + ATP = O-phospho-L-seryl-[protein] + ADP + H(+). The enzyme catalyses L-threonyl-[protein] + ATP = O-phospho-L-threonyl-[protein] + ADP + H(+). With respect to regulation, activated by binding of S100B which releases autoinhibitory N-lobe interactions, enabling ATP to bind and the autophosphorylation of Ser-282. Thr-442 then undergoes calcium-dependent phosphorylation by STK24/MST3. Interactions between phosphorylated Thr-442 and the N-lobe promote additional structural changes that complete the activation of the kinase. Autoinhibition is also released by the binding of MOB1/MOBKL1A and MOB2/HCCA2 to the N-terminal of STK38L. Involved in the regulation of structural processes in differentiating and mature neuronal cells. This Homo sapiens (Human) protein is Serine/threonine-protein kinase 38-like.